A 201-amino-acid chain; its full sequence is Fas apoptotic inhibitory molecule 1 (201 aa).

It belongs to the FAIM1 family.

It localises to the cytoplasm. In terms of biological role, plays a role as an inducible effector molecule that mediates Fas resistance produced by surface Ig engagement in B cells. In Bos taurus (Bovine), this protein is Fas apoptotic inhibitory molecule 1 (FAIM).